Reading from the N-terminus, the 260-residue chain is Large ribosomal subunit protein eL8A (260 aa).

The interval 1 to 34 is disordered; it reads MPSSKKVAPAPLATKSKASTSTKNPLFESTPKNF.

The protein belongs to the eukaryotic ribosomal protein eL8 family. Component of the large ribosomal subunit. Mature ribosomes consist of a small (40S) and a large (60S) subunit. The 40S subunit contains about 32 different proteins and 1 molecule of RNA (18S). The 60S subunit contains 45 different proteins and 3 molecules of RNA (25S, 5.8S and 5S).

It is found in the cytoplasm. Functionally, component of the ribosome, a large ribonucleoprotein complex responsible for the synthesis of proteins in the cell. The small ribosomal subunit (SSU) binds messenger RNAs (mRNAs) and translates the encoded message by selecting cognate aminoacyl-transfer RNA (tRNA) molecules. The large subunit (LSU) contains the ribosomal catalytic site termed the peptidyl transferase center (PTC), which catalyzes the formation of peptide bonds, thereby polymerizing the amino acids delivered by tRNAs into a polypeptide chain. The nascent polypeptides leave the ribosome through a tunnel in the LSU and interact with protein factors that function in enzymatic processing, targeting, and the membrane insertion of nascent chains at the exit of the ribosomal tunnel. The chain is Large ribosomal subunit protein eL8A from Candida albicans (strain SC5314 / ATCC MYA-2876) (Yeast).